Consider the following 977-residue polypeptide: MRTAGRDPVPRRSPRWRRAVPLCETSAGRRVTQLRGDDLRRPATMKGKERSPVKAKRSRGGEDSTSRGERSKKLGGSGGSNGSSSGKTDSGGGSRRSLHLDKSSSRGGSREYDTGGGSSSSRLHSYSSPSTKNSSGGGESRSSSRGGGGESRSSGAASSAPGGGDGAEYKTLKISELGSQLSDEAVEDGLFHEFKRFGDVSVKISHLSGSGSGDERVAFVNFRRPEDARAAKHARGRLVLYDRPLKIEAVYVSRRRSRSPLDKDTYPPSASVVGASVGGHRHPPGGGGGQRSLSPGGAALGYRDYRLQQLALGRLPPPPPPPLPRDLERERDYPFYERVRPAYSLEPRVGAGAGAAPFREVDEISPEDDQRANRTLFLGNLDITVTESDLRRAFDRFGVITEVDIKRPSRGQTSTYGFLKFENLDMSHRAKLAMSGKIIIRNPIKIGYGKATPTTRLWVGGLGPWVPLAALAREFDRFGTIRTIDYRKGDSWAYIQYESLDAAHAAWTHMRGFPLGGPDRRLRVDFADTEHRYQQQYLQPLPLTHYELVTDAFGHRAPDPLRGARDRTPPLLYRDRDRDLYPDSDWVPPPPPVRERSTRTAATSVPAYEPLDSLDRRRDGWSLDRDRGDRDLPSSRDQPRKRRLPEESGGRHLDRSPESDRPRKRHCAPSPDRSPELSSSRDRYNSDNDRSSRLLLERPSPIRDRRGSLEKSQGDKRDRKNSASAERDRKHRTTAPTEGKSPLKKEDRSDGSAPSTSTASSKLKSPSQKQDGGTAPVASASPKLCLAWQGMLLLKNSNFPSNMHLLQGDLQVASSLLVEGSTGGKVAQLKITQRLRLDQPKLDEVTRRIKVAGPNGYAILLAVPGSSDSRSSSSSAASDTATSTQRPLRNLVSYLKQKQAAGVISLPVGGNKDKENTGVLHAFPPCEFSQQFLDSPAKALAKSEEDYLVMIIVRGFGFQIGVRYENKKRENLALTLL.

4 stretches are compositionally biased toward basic and acidic residues: residues 1–10 (MRTAGRDPVP), 35–52 (RGDD…ERSP), 59–72 (RGGE…ERSK), and 98–113 (LHLD…REYD). Residues 1-167 (MRTAGRDPVP…SSAPGGGDGA (167 aa)) form a disordered region. Ser-109 carries the phosphoserine modification. Low complexity predominate over residues 119-130 (SSSRLHSYSSPS). A compositionally biased stretch (gly residues) spans 135-150 (SGGGESRSSSRGGGGE). Low complexity predominate over residues 151 to 160 (SRSSGAASSA). The 83-residue stretch at 170 to 252 (KTLKISELGS…RPLKIEAVYV (83 aa)) folds into the RRM 1 domain. Phosphoserine is present on residues Ser-179, Ser-208, and Ser-210. Residue Lys-246 forms a Glycyl lysine isopeptide (Lys-Gly) (interchain with G-Cter in SUMO2) linkage. Phosphoserine occurs at positions 253, 257, and 259. The interval 256 to 298 (RSRSPLDKDTYPPSASVVGASVGGHRHPPGGGGGQRSLSPGGA) is disordered. At Tyr-266 the chain carries Phosphotyrosine. Phosphoserine occurs at positions 292, 294, and 365. RRM domains lie at 374 to 451 (RTLF…YGKA) and 455 to 529 (TRLW…FADT). Residues Lys-406, Lys-420, and Lys-445 each participate in a glycyl lysine isopeptide (Lys-Gly) (interchain with G-Cter in SUMO2) cross-link. Lys-450 carries the post-translational modification N6-acetyllysine. 2 stretches are compositionally biased toward basic and acidic residues: residues 555 to 581 (HRAP…RDLY) and 613 to 661 (SLDR…ESDR). The disordered stretch occupies residues 555 to 778 (HRAPDPLRGA…KQDGGTAPVA (224 aa)). Position 568 is a phosphothreonine (Thr-568). Arg-578 bears the Asymmetric dimethylarginine; alternate; by PRMT1 mark. The residue at position 578 (Arg-578) is an Omega-N-methylarginine; alternate; by PRMT1. Ser-622, Ser-656, Ser-670, Ser-674, Ser-700, and Ser-741 each carry phosphoserine. 2 stretches are compositionally biased toward basic and acidic residues: residues 673–728 (RSPE…AERD) and 741–750 (SPLKKEDRSD). Lys-744 participates in a covalent cross-link: Glycyl lysine isopeptide (Lys-Gly) (interchain with G-Cter in SUMO2). Polar residues predominate over residues 752 to 771 (SAPSTSTASSKLKSPSQKQD). 3 positions are modified to phosphoserine: Ser-765, Ser-767, and Ser-781. The SPOC domain maps to 777-956 (VASASPKLCL…YLVMIIVRGF (180 aa)). The tract at residues 865-884 (GSSDSRSSSSSAASDTATST) is disordered. Positions 866-884 (SSDSRSSSSSAASDTATST) are enriched in low complexity. Phosphoserine is present on Ser-935.

The protein belongs to the RRM Spen family. Component of the WMM complex, a N6-methyltransferase complex composed of a catalytic subcomplex, named MAC, and of an associated subcomplex, named MACOM. The MAC subcomplex is composed of METTL3 and METTL14. The MACOM subcomplex is composed of WTAP, ZC3H13, CBLL1/HAKAI, VIRMA, and, in some cases of RBM15 (RBM15 or RBM15B). Also a component of a MACOM-like complex, named WTAP complex, composed of WTAP, ZC3H13, CBLL1, VIRMA, RBM15, BCLAF1 and THRAP3. Interacts with RBPJ. Interacts (via SPOC domain) with SETD1B. Interacts with NXF1, the interaction is required to promote mRNA export. Interacts with SF3B1. As to quaternary structure, (Microbial infection) Interacts with Epstein-Barr virus BSFL2/BMLF1. Post-translationally, methylated at Arg-578 by PRMT1, leading to promote ubiquitination by CNOT4 and subsequent degradation by the proteasome. In terms of processing, ubiquitinated by CNOT4 following methylation at Arg-578 by PRMT1.

The protein resides in the nucleus speckle. The protein localises to the nucleus. It localises to the nucleoplasm. It is found in the nucleus envelope. Its subcellular location is the nucleus membrane. In terms of biological role, RNA-binding protein that acts as a key regulator of N6-methyladenosine (m6A) methylation of RNAs, thereby regulating different processes, such as hematopoietic cell homeostasis, alternative splicing of mRNAs and X chromosome inactivation mediated by Xist RNA. Associated component of the WMM complex, a complex that mediates N6-methyladenosine (m6A) methylation of RNAs, a modification that plays a role in the efficiency of mRNA splicing and RNA processing. Plays a key role in m6A methylation, possibly by binding target RNAs and recruiting the WMM complex. Involved in random X inactivation mediated by Xist RNA: acts by binding Xist RNA and recruiting the WMM complex, which mediates m6A methylation, leading to target YTHDC1 reader on Xist RNA and promoting transcription repression activity of Xist. Required for the development of multiple tissues, such as the maintenance of the homeostasis of long-term hematopoietic stem cells and for megakaryocyte (MK) and B-cell differentiation. Regulates megakaryocyte differentiation by regulating alternative splicing of genes important for megakaryocyte differentiation; probably regulates alternative splicing via m6A regulation. Required for placental vascular branching morphogenesis and embryonic development of the heart and spleen. Acts as a regulator of thrombopoietin response in hematopoietic stem cells by regulating alternative splicing of MPL. May also function as an mRNA export factor, stimulating export and expression of RTE-containing mRNAs which are present in many retrotransposons that require to be exported prior to splicing. High affinity binding of pre-mRNA to RBM15 may allow targeting of the mRNP to the export helicase DBP5 in a manner that is independent of splicing-mediated NXF1 deposition, resulting in export prior to splicing. May be implicated in HOX gene regulation. The sequence is that of RNA-binding protein 15 from Homo sapiens (Human).